The following is a 190-amino-acid chain: uncharacterized protein (190 aa).

The protein to Synechocystis PCC 6803 sll1609 and slr1290.

This is an uncharacterized protein from Synechocystis sp. (strain ATCC 27184 / PCC 6803 / Kazusa).